A 124-amino-acid polypeptide reads, in one-letter code: Large ribosomal subunit protein bL12 (124 aa).

It belongs to the bacterial ribosomal protein bL12 family. As to quaternary structure, homodimer. Part of the ribosomal stalk of the 50S ribosomal subunit. Forms a multimeric L10(L12)X complex, where L10 forms an elongated spine to which 2 to 4 L12 dimers bind in a sequential fashion. Binds GTP-bound translation factors.

Forms part of the ribosomal stalk which helps the ribosome interact with GTP-bound translation factors. Is thus essential for accurate translation. In Burkholderia lata (strain ATCC 17760 / DSM 23089 / LMG 22485 / NCIMB 9086 / R18194 / 383), this protein is Large ribosomal subunit protein bL12.